The chain runs to 182 residues: Adenine phosphoribosyltransferase (182 aa).

This sequence belongs to the purine/pyrimidine phosphoribosyltransferase family. In terms of assembly, homodimer.

Its subcellular location is the cytoplasm. The enzyme catalyses AMP + diphosphate = 5-phospho-alpha-D-ribose 1-diphosphate + adenine. It participates in purine metabolism; AMP biosynthesis via salvage pathway; AMP from adenine: step 1/1. Functionally, catalyzes a salvage reaction resulting in the formation of AMP, that is energically less costly than de novo synthesis. This is Adenine phosphoribosyltransferase from Campylobacter concisus (strain 13826).